The chain runs to 976 residues: MNAGPGCEPCTKRPRWGAATTSPAASDARSFPSRQRRVLDPKDAHVQFRVPPSSPACVPGRAGQHRGSATSLVFKQKTITSWMDTKGIKTAESESLDSKENNNTRIESMMSSVQKDNFYQHNVEKLENVSQLSLDKSPTEKSTQYLNQHQTAAMCKWQNEGKHTEQLLESEPQTVTLVPEQFSNANIDRSPQNDDHSDTDSEENRDNQQFLTTVKLANAKQTTEDEQAREAKSHQKCSKSCDPGEDCASCQQDEIDVVPESPLSDVGSEDVGTGPKNDNKLTRQESCLGNSPPFEKESEPESPMDVDNSKNSCQDSEADEETSPGFDEQEDGSSSQTANKPSRFQARDADIEFRKRYSTKGGEVRLHFQFEGGESRTGMNDLNAKLPGNISSLNVECRNSKQHGKKDSKITDHFMRLPKAEDRRKEQWETKHQRTERKIPKYVPPHLSPDKKWLGTPIEEMRRMPRCGIRLPLLRPSANHTVTIRVDLLRAGEVPKPFPTHYKDLWDNKHVKMPCSEQNLYPVEDENGERTAGSRWELIQTALLNKFTRPQNLKDAILKYNVAYSKKWDFTALIDFWDKVLEEAEAQHLYQSILPDMVKIALCLPNICTQPIPLLKQKMNHSITMSQEQIASLLANAFFCTFPRRNAKMKSEYSSYPDINFNRLFEGRSSRKPEKLKTLFCYFRRVTEKKPTGLVTFTRQSLEDFPEWERCEKPLTRLHVTYEGTIEENGQGMLQVDFANRFVGGGVTSAGLVQEEIRFLINPELIISRLFTEVLDHNECLIITGTEQYSEYTGYAETYRWSRSHEDGSERDDWQRRCTEIVAIDALHFRRYLDQFVPEKMRRELNKAYCGFLRPGVSSENLSAVATGNWGCGAFGGDARLKALIQILAAAAAERDVVYFTFGDSELMRDIYSMHIFLTERKLTVGDVYKLLLRYYNEECRNCSTPGPDIKLYPFIYHAVESCAETADHSGQRTGT.

M1 is modified (N-acetylmethionine). The disordered stretch occupies residues 1-69; the sequence is MNAGPGCEPC…GRAGQHRGSA (69 aa). The A-domain stretch occupies residues 1 to 456; sequence MNAGPGCEPC…LSPDKKWLGT (456 aa). Residues 10-16 carry the Nuclear localization signal motif; that stretch reads CTKRPRW. S22 is subject to Phosphoserine. Residues 37 to 46 are compositionally biased toward basic and acidic residues; it reads RVLDPKDAHV. Phosphoserine is present on S68. A PIP-box (PCNA interacting peptide) motif is present at residues 76-83; sequence QKTITSWM. Phosphoserine occurs at positions 133 and 137. Residue T139 is modified to Phosphothreonine. The disordered stretch occupies residues 183–350; that stretch reads SNANIDRSPQ…PSRFQARDAD (168 aa). 2 stretches are compositionally biased toward basic and acidic residues: residues 191-206 and 222-233; these read PQND…ENRD and TTEDEQAREAKS. A Phosphoserine modification is found at S197. T199 carries the post-translational modification Phosphothreonine. A phosphoserine mark is found at S261, S264, S286, S291, S298, S302, and S316. Residues 316 to 331 are compositionally biased toward acidic residues; it reads SEADEETSPGFDEQED. Polar residues predominate over residues 332-342; it reads GSSSQTANKPS. N6-acetyllysine is present on K340. Position 448 is a phosphoserine (S448). The segment at 610 to 795 is catalytic; the sequence is QPIPLLKQKM…TEQYSEYTGY (186 aa). 726–727 is a binding site for substrate; sequence IE. Residue D737 is part of the active site. Substrate is bound by residues N740 and Q754. Active-site residues include E755 and E756. Substrate contacts are provided by residues Y795 and 869–874; that span reads NWGCGA.

The protein belongs to the poly(ADP-ribose) glycohydrolase family. As to quaternary structure, interacts with PCNA. Interacts with NUDT5. As to expression, ubiquitously expressed.

Its subcellular location is the nucleus. It localises to the cytoplasm. The protein resides in the mitochondrion. The protein localises to the mitochondrion matrix. It carries out the reaction [(1''-&gt;2')-ADP-alpha-D-ribose](n) + H2O = [(1''-&gt;2')-ADP-alpha-D-ribose](n-1) + ADP-D-ribose. Functionally, poly(ADP-ribose) glycohydrolase that degrades poly(ADP-ribose) by hydrolyzing the ribose-ribose bonds present in poly(ADP-ribose). PARG acts both as an endo- and exoglycosidase, releasing poly(ADP-ribose) of different length as well as ADP-ribose monomers. It is however unable to cleave the ester bond between the terminal ADP-ribose and ADP-ribosylated residues, leaving proteins that are mono-ADP-ribosylated. Poly(ADP-ribose) is synthesized after DNA damage is only present transiently and is rapidly degraded by PARG. Required to prevent detrimental accumulation of poly(ADP-ribose) upon prolonged replicative stress, while it is not required for recovery from transient replicative stress. Responsible for the prevalence of mono-ADP-ribosylated proteins in cells, thanks to its ability to degrade poly(ADP-ribose) without cleaving the terminal protein-ribose bond. Required for retinoid acid-dependent gene transactivation, probably by removing poly(ADP-ribose) from histone demethylase KDM4D, allowing chromatin derepression at RAR-dependent gene promoters. Involved in the synthesis of ATP in the nucleus, together with PARP1, NMNAT1 and NUDT5. Nuclear ATP generation is required for extensive chromatin remodeling events that are energy-consuming. The polypeptide is Poly(ADP-ribose) glycohydrolase (Homo sapiens (Human)).